Consider the following 318-residue polypeptide: NADH-ubiquinone oxidoreductase chain 1 (318 aa).

The next 8 helical transmembrane spans lie at 2–22, 70–90, 100–120, 140–160, 172–192, 217–237, 253–273, and 294–314; these read FLVN…FLTL, MFIM…TPLP, LGVL…LWSG, ISYE…SGSF, LWLI…TLAE, GGSF…MNAI, EFYT…FLWI, and LPLT…TASI.

Belongs to the complex I subunit 1 family. As to quaternary structure, core subunit of respiratory chain NADH dehydrogenase (Complex I) which is composed of 45 different subunits.

Its subcellular location is the mitochondrion inner membrane. It catalyses the reaction a ubiquinone + NADH + 5 H(+)(in) = a ubiquinol + NAD(+) + 4 H(+)(out). Core subunit of the mitochondrial membrane respiratory chain NADH dehydrogenase (Complex I) which catalyzes electron transfer from NADH through the respiratory chain, using ubiquinone as an electron acceptor. Essential for the catalytic activity and assembly of complex I. In Emballonura alecto (Philippine sheath-tailed bat), this protein is NADH-ubiquinone oxidoreductase chain 1 (MT-ND1).